The primary structure comprises 345 residues: S-adenosylmethionine:tRNA ribosyltransferase-isomerase (345 aa).

The protein belongs to the QueA family. Monomer.

It localises to the cytoplasm. It carries out the reaction 7-aminomethyl-7-carbaguanosine(34) in tRNA + S-adenosyl-L-methionine = epoxyqueuosine(34) in tRNA + adenine + L-methionine + 2 H(+). Its pathway is tRNA modification; tRNA-queuosine biosynthesis. In terms of biological role, transfers and isomerizes the ribose moiety from AdoMet to the 7-aminomethyl group of 7-deazaguanine (preQ1-tRNA) to give epoxyqueuosine (oQ-tRNA). The sequence is that of S-adenosylmethionine:tRNA ribosyltransferase-isomerase from Alkalilimnicola ehrlichii (strain ATCC BAA-1101 / DSM 17681 / MLHE-1).